Reading from the N-terminus, the 498-residue chain is Aspartyl aminopeptidase (498 aa).

Residue H91 participates in Zn(2+) binding. H166 is a substrate binding site. D274 contributes to the Zn(2+) binding site. Position 311 (E311) interacts with substrate. 2 residues coordinate Zn(2+): E312 and D363. Substrate is bound by residues D363, H366, K391, and Y398. H463 contributes to the Zn(2+) binding site.

Belongs to the peptidase M18 family. In terms of assembly, tetrahedron-shaped homododecamer built from six homodimers. Requires Zn(2+) as cofactor. Post-translationally, the N-terminus is blocked.

It catalyses the reaction Release of an N-terminal aspartate or glutamate from a peptide, with a preference for aspartate.. With respect to regulation, inhibited by zinc. Stimulated by calcium and bacitracin. This Aspergillus oryzae (strain ATCC 42149 / RIB 40) (Yellow koji mold) protein is Aspartyl aminopeptidase (dapA).